The primary structure comprises 385 residues: Hsp70/Hsp90 co-chaperone CNS1 (385 aa).

A disordered region spans residues 1-37 (MSSVNANGGYTKPQKYVPGPGDPELPPQLSEFKDKTS). TPR repeat units follow at residues 83-116 (AENF…ECED), 121-154 (ESLY…NPKN), and 155-189 (VKCY…DPEN).

The protein belongs to the TTC4 family. Monomer. Component of Hsp70 and Hsp90 chaperone complexes. Interacts (via TPR repeats) with HSC82 and HSP82 (via C-terminal MEEVD pentapeptide). Interacts with CPR7, SSA1 and SPI1.

It is found in the cytoplasm. In terms of biological role, co-chaperone that binds to the molecular chaperones Hsp90 (HSC82 and HSP82) and Hsp70 (SSA1). Stimulates SSA1 ATPase activity, but not Hsp90 ATPase activity. Involved in only a subset of Hsp90 functions. The protein is Hsp70/Hsp90 co-chaperone CNS1 (CNS1) of Saccharomyces cerevisiae (strain ATCC 204508 / S288c) (Baker's yeast).